The following is an 83-amino-acid chain: FELLPSQDRSCCIQKTLECLENYPGQASQRAHYCQQDATTNCPDTYYFGCCPGYATCMSINAGNNVRSAFDKCINRLCFDPGH.

P24 and P43 each carry 4-hydroxyproline; partial. Residue H83 is modified to Histidine amide.

May form a non-covalent dimer. In terms of processing, contains 5 disulfide bonds. Expressed by the venom duct.

The protein localises to the secreted. This chain is Conotoxin p21a, found in Conus purpurascens (Purple cone).